The chain runs to 509 residues: Bifunctional purine biosynthesis protein PurH (509 aa).

In terms of domain architecture, MGS-like spans 1–144 (MKRALISVSD…KNYAAVTVVV (144 aa)).

The protein belongs to the PurH family.

It catalyses the reaction (6R)-10-formyltetrahydrofolate + 5-amino-1-(5-phospho-beta-D-ribosyl)imidazole-4-carboxamide = 5-formamido-1-(5-phospho-D-ribosyl)imidazole-4-carboxamide + (6S)-5,6,7,8-tetrahydrofolate. It carries out the reaction IMP + H2O = 5-formamido-1-(5-phospho-D-ribosyl)imidazole-4-carboxamide. Its pathway is purine metabolism; IMP biosynthesis via de novo pathway; 5-formamido-1-(5-phospho-D-ribosyl)imidazole-4-carboxamide from 5-amino-1-(5-phospho-D-ribosyl)imidazole-4-carboxamide (10-formyl THF route): step 1/1. It functions in the pathway purine metabolism; IMP biosynthesis via de novo pathway; IMP from 5-formamido-1-(5-phospho-D-ribosyl)imidazole-4-carboxamide: step 1/1. In Listeria monocytogenes serotype 4b (strain F2365), this protein is Bifunctional purine biosynthesis protein PurH.